The primary structure comprises 437 residues: Phosphomethylpyrimidine synthase (437 aa).

Substrate-binding positions include Asn-69, Met-98, Tyr-127, His-163, 185-187 (SRG), 226-229 (DACR), and Glu-265. Position 269 (His-269) interacts with Zn(2+). Tyr-292 is a binding site for substrate. Zn(2+) is bound at residue His-333. 3 residues coordinate [4Fe-4S] cluster: Cys-409, Cys-412, and Cys-416.

Belongs to the ThiC family. [4Fe-4S] cluster is required as a cofactor.

The catalysed reaction is 5-amino-1-(5-phospho-beta-D-ribosyl)imidazole + S-adenosyl-L-methionine = 4-amino-2-methyl-5-(phosphooxymethyl)pyrimidine + CO + 5'-deoxyadenosine + formate + L-methionine + 3 H(+). It participates in cofactor biosynthesis; thiamine diphosphate biosynthesis. Functionally, catalyzes the synthesis of the hydroxymethylpyrimidine phosphate (HMP-P) moiety of thiamine from aminoimidazole ribotide (AIR) in a radical S-adenosyl-L-methionine (SAM)-dependent reaction. The polypeptide is Phosphomethylpyrimidine synthase (Clostridium novyi (strain NT)).